The chain runs to 378 residues: Cytochrome b (378 aa).

The next 4 helical transmembrane spans lie at Phe-34–Met-54, Trp-78–Val-99, Trp-114–Leu-134, and Phe-179–Leu-199. Heme b contacts are provided by His-84 and His-98. His-183 and His-197 together coordinate heme b. Residue His-202 coordinates a ubiquinone. 4 consecutive transmembrane segments (helical) span residues Phe-227–Ser-247, Leu-289–Asn-309, Ile-321–Ala-341, and Tyr-348–Leu-368.

Belongs to the cytochrome b family. In terms of assembly, the main subunits of complex b-c1 are: cytochrome b, cytochrome c1 and the Rieske protein. The cofactor is heme b.

It localises to the mitochondrion inner membrane. In terms of biological role, component of the ubiquinol-cytochrome c reductase complex (complex III or cytochrome b-c1 complex) that is part of the mitochondrial respiratory chain. The b-c1 complex mediates electron transfer from ubiquinol to cytochrome c. Contributes to the generation of a proton gradient across the mitochondrial membrane that is then used for ATP synthesis. The polypeptide is Cytochrome b (mt:Cyt-b) (Drosophila melanogaster (Fruit fly)).